Here is a 161-residue protein sequence, read N- to C-terminus: Cyclic pyranopterin monophosphate synthase (161 aa).

Substrate-binding positions include 75–77 (LCH) and 113–114 (ME). Aspartate 128 is an active-site residue.

This sequence belongs to the MoaC family. Homohexamer; trimer of dimers.

The catalysed reaction is (8S)-3',8-cyclo-7,8-dihydroguanosine 5'-triphosphate = cyclic pyranopterin phosphate + diphosphate. Its pathway is cofactor biosynthesis; molybdopterin biosynthesis. Functionally, catalyzes the conversion of (8S)-3',8-cyclo-7,8-dihydroguanosine 5'-triphosphate to cyclic pyranopterin monophosphate (cPMP). The chain is Cyclic pyranopterin monophosphate synthase from Enterobacter sp. (strain 638).